The primary structure comprises 273 residues: 4-hydroxy-tetrahydrodipicolinate reductase (273 aa).

NAD(+) contacts are provided by residues 12–17 (GAGGRM) and E38. R39 serves as a coordination point for NADP(+). NAD(+) is bound by residues 102–104 (GTT) and 126–129 (AANF). H159 acts as the Proton donor/acceptor in catalysis. H160 contributes to the (S)-2,3,4,5-tetrahydrodipicolinate binding site. The Proton donor role is filled by K163. A (S)-2,3,4,5-tetrahydrodipicolinate-binding site is contributed by 169-170 (GT).

This sequence belongs to the DapB family. Homotetramer.

The protein localises to the cytoplasm. It catalyses the reaction (S)-2,3,4,5-tetrahydrodipicolinate + NAD(+) + H2O = (2S,4S)-4-hydroxy-2,3,4,5-tetrahydrodipicolinate + NADH + H(+). The catalysed reaction is (S)-2,3,4,5-tetrahydrodipicolinate + NADP(+) + H2O = (2S,4S)-4-hydroxy-2,3,4,5-tetrahydrodipicolinate + NADPH + H(+). It functions in the pathway amino-acid biosynthesis; L-lysine biosynthesis via DAP pathway; (S)-tetrahydrodipicolinate from L-aspartate: step 4/4. Functionally, catalyzes the conversion of 4-hydroxy-tetrahydrodipicolinate (HTPA) to tetrahydrodipicolinate. This is 4-hydroxy-tetrahydrodipicolinate reductase from Salmonella dublin (strain CT_02021853).